A 98-amino-acid polypeptide reads, in one-letter code: Integration host factor subunit alpha (98 aa).

This sequence belongs to the bacterial histone-like protein family. In terms of assembly, heterodimer of an alpha and a beta chain.

Functionally, this protein is one of the two subunits of integration host factor, a specific DNA-binding protein that functions in genetic recombination as well as in transcriptional and translational control. The polypeptide is Integration host factor subunit alpha (Glaesserella parasuis serovar 5 (strain SH0165) (Haemophilus parasuis)).